Consider the following 329-residue polypeptide: UDP-sugar transporter sqv-7 (329 aa).

9 consecutive transmembrane segments (helical) span residues 15 to 34, 41 to 63, 86 to 108, 129 to 151, 155 to 174, 187 to 209, 224 to 246, 253 to 275, and 280 to 302; these read SAVF…KILL, SFLF…AKMF, YFFN…FTVL, SKAV…IYDL, ALGY…LGVY, YGLM…QYTG, TSSV…YSLV, SALT…GMFS, and VFQW…YTYV.

The protein belongs to the TPT transporter family. SLC35D subfamily.

It localises to the golgi apparatus membrane. Functionally, acts as a transporter of UDP-glucuronic acid (UDP-GlcA), UDP-N-acetylgalactosamine (UDP-GalNAc) and UDP-galactose (UDP-Gal) from the cytoplasm into the Golgi lumen. Involved in the biosynthesis of glycoconjugates that play a pivotal role in development. Involved in the synthesis of chondroitin sulfate and heparan sulfate proteoglycans. Required for embryonic development. Involved in vulva epithelium invagination and embryonic development. Involved in the directed migration of hermaphrodite-specific neurons. The chain is UDP-sugar transporter sqv-7 (sqv-7) from Caenorhabditis elegans.